The following is a 217-amino-acid chain: UPF0502 protein VFMJ11_A0613 (217 aa).

This sequence belongs to the UPF0502 family.

The protein is UPF0502 protein VFMJ11_A0613 of Aliivibrio fischeri (strain MJ11) (Vibrio fischeri).